Consider the following 349-residue polypeptide: 4-hydroxythreonine-4-phosphate dehydrogenase (349 aa).

Position 136 (Thr136) interacts with substrate. 3 residues coordinate a divalent metal cation: His171, His216, and His281. Substrate-binding residues include Lys289, Asn298, and Arg307.

It belongs to the PdxA family. In terms of assembly, homodimer. Requires a divalent metal cation as cofactor.

Its subcellular location is the cytoplasm. It catalyses the reaction 4-(phosphooxy)-L-threonine + NAD(+) = 3-amino-2-oxopropyl phosphate + CO2 + NADH. The protein operates within cofactor biosynthesis; pyridoxine 5'-phosphate biosynthesis; pyridoxine 5'-phosphate from D-erythrose 4-phosphate: step 4/5. Functionally, catalyzes the NAD(P)-dependent oxidation of 4-(phosphooxy)-L-threonine (HTP) into 2-amino-3-oxo-4-(phosphooxy)butyric acid which spontaneously decarboxylates to form 3-amino-2-oxopropyl phosphate (AHAP). The sequence is that of 4-hydroxythreonine-4-phosphate dehydrogenase from Synechocystis sp. (strain ATCC 27184 / PCC 6803 / Kazusa).